We begin with the raw amino-acid sequence, 585 residues long: Glutamate decarboxylase 2 (585 aa).

Residues 1 to 24 (MASPGSGFWSFGSEDGSGDPENSG) form a disordered region. A phosphoserine mark is found at Ser3, Ser6, Ser10, and Ser13. S-palmitoyl cysteine attachment occurs at residues Cys30 and Cys45. Residue 181 to 183 (QLS) participates in substrate binding. The residue at position 396 (Lys396) is an N6-(pyridoxal phosphate)lysine. Residue Arg558 coordinates substrate.

The protein belongs to the group II decarboxylase family. As to quaternary structure, homodimer. Pyridoxal 5'-phosphate is required as a cofactor. Phosphorylated; which does not affect kinetic parameters or subcellular location. In terms of processing, palmitoylated; which is required for presynaptic clustering.

It localises to the cytoplasm. It is found in the cytosol. Its subcellular location is the cytoplasmic vesicle. The protein resides in the presynaptic cell membrane. The protein localises to the golgi apparatus membrane. The catalysed reaction is L-glutamate + H(+) = 4-aminobutanoate + CO2. Functionally, catalyzes the production of GABA. This chain is Glutamate decarboxylase 2 (GAD2), found in Sus scrofa (Pig).